The sequence spans 299 residues: Transcription factor srbB (299 aa).

2 disordered regions span residues 1–33 (MAYNNRPDASTAFTFDNDDRFVNQQPKGPDPLS) and 81–204 (ISGF…NAAK). Over residues 161-170 (PVTSQATTSP) the composition is skewed to low complexity. The span at 188 to 199 (RSLSTDSQTATG) shows a compositional bias: polar residues. The tract at residues 203–216 (AKRAAHNIIEKRYR) is basic motif. Positions 203 to 264 (AKRAAHNIIE…TNAIAYMQEL (62 aa)) constitute a bHLH domain. The interval 217-264 (TNMNAKFVALEKAMSGSGVQKPTKGGSGPASLKKSEILTNAIAYMQEL) is helix-loop-helix motif. Residues 254 to 281 (LTNAIAYMQELQDQNAALQKELALLKQN) are a coiled coil.

The protein localises to the nucleus. Functionally, key transcription factors critical for hypoxia adaptation and virulence. Plays a major role in regulation of heme biosynthesis and carbohydrate metabolism early in the response to hypoxia. This Aspergillus fumigatus (strain ATCC MYA-4609 / CBS 101355 / FGSC A1100 / Af293) (Neosartorya fumigata) protein is Transcription factor srbB.